The primary structure comprises 271 residues: Sulfur carrier protein adenylyltransferase (271 aa).

ATP-binding positions include arginine 13, glycine 40, glutamate 61, arginine 72, lysine 85, leucine 109, and 129 to 133 (DNFPT). 2 residues coordinate Zn(2+): cysteine 175 and cysteine 178. Residue cysteine 192 forms a Glycyl cysteine thioester (Cys-Gly) (interchain with G-Cter in TtuB) linkage. Residues cysteine 249 and cysteine 252 each contribute to the Zn(2+) site.

Belongs to the HesA/MoeB/ThiF family. Zn(2+) serves as cofactor. In terms of processing, conjugated to TtuB via a covalent linkage that likely involves a lysine residue. Is able to form a covalent thioester adduct with TtuB via Cys-192 in vitro.

The catalysed reaction is [molybdopterin-synthase sulfur-carrier protein]-C-terminal Gly-Gly + ATP + H(+) = [molybdopterin-synthase sulfur-carrier protein]-C-terminal Gly-Gly-AMP + diphosphate. It carries out the reaction [ThiS sulfur-carrier protein]-C-terminal Gly-Gly + ATP + H(+) = [ThiS sulfur-carrier protein]-C-terminal Gly-Gly-AMP + diphosphate. It catalyses the reaction [TtuB sulfur-carrier protein]-C-terminal Gly-Gly + ATP + H(+) = [TtuB sulfur-carrier protein]-C-terminal Gly-Gly-AMP + diphosphate. The protein operates within tRNA modification. It participates in cofactor biosynthesis; thiamine diphosphate biosynthesis. Its pathway is cofactor biosynthesis; molybdopterin biosynthesis. With respect to regulation, enzymatic activity may be regulated by TtuB conjugation. In terms of biological role, adenylyltransferase involved in the biosynthesis of several sulfur compounds. Is required for the 2-thiolation of 5-methyluridine residue at position 54 in the T loop of tRNAs, leading to 5-methyl-2-thiouridine (m(5)s(2)U or s(2)T). This modification allows thermal stabilization of tRNAs in thermophilic microorganisms, and is essential for cell growth at high temperatures. TtuC catalyzes the adenylation by ATP of the carboxyl group of the C-terminal glycine of sulfur carrier protein TtuB. Is also involved in the biosynthesis of thiamine, molybdenum cofactor (Moco) and probably tungsten cofactor (Wco), by adenylating the sulfur carriers ThiS and MoaD. Is required for the conjugation of TtuB to target proteins. The protein is Sulfur carrier protein adenylyltransferase of Thermus thermophilus (strain ATCC BAA-163 / DSM 7039 / HB27).